Here is a 679-residue protein sequence, read N- to C-terminus: Glycine--tRNA ligase beta subunit (679 aa).

The protein belongs to the class-II aminoacyl-tRNA synthetase family. In terms of assembly, tetramer of two alpha and two beta subunits.

Its subcellular location is the cytoplasm. It carries out the reaction tRNA(Gly) + glycine + ATP = glycyl-tRNA(Gly) + AMP + diphosphate. In Streptococcus pyogenes serotype M28 (strain MGAS6180), this protein is Glycine--tRNA ligase beta subunit.